The following is a 70-amino-acid chain: Conotoxin Cl6.13 (70 aa).

Positions 1-21 are cleaved as a signal peptide; sequence MKFPLLFISLALAAFLTRVQD. Residues 22-33 constitute a propeptide that is removed on maturation; it reads ADSSVISKEKSV. 3 disulfide bridges follow: Cys-41/Cys-58, Cys-48/Cys-63, and Cys-57/Cys-68.

In terms of tissue distribution, expressed by the venom duct.

It localises to the secreted. The chain is Conotoxin Cl6.13 from Californiconus californicus (California cone).